A 401-amino-acid chain; its full sequence is Subtilisin-like protease 10 (401 aa).

Residues 1–19 (MLFLKAVIAILSVLPAADA) form the signal peptide. Positions 20-116 (AAILNFENKQ…IEPDRMASAQ (97 aa)) are excised as a propeptide. The region spanning 35–112 (SYIVVLKNDI…QVDYIEPDRM (78 aa)) is the Inhibitor I9 domain. A Peptidase S8 domain is found at 126 to 401 (SWGLGRISHQ…NRLLYNGSGQ (276 aa)). Catalysis depends on charge relay system residues D158 and H189. N-linked (GlcNAc...) asparagine glycosylation is present at N250. S347 functions as the Charge relay system in the catalytic mechanism. Residue N397 is glycosylated (N-linked (GlcNAc...) asparagine).

It belongs to the peptidase S8 family.

It is found in the secreted. In terms of biological role, secreted subtilisin-like serine protease with keratinolytic activity that contributes to pathogenicity. The sequence is that of Subtilisin-like protease 10 (SUB10) from Arthroderma otae (strain ATCC MYA-4605 / CBS 113480) (Microsporum canis).